Consider the following 102-residue polypeptide: Small ribosomal subunit protein eS24 (102 aa).

The protein belongs to the eukaryotic ribosomal protein eS24 family.

The protein is Small ribosomal subunit protein eS24 of Methanococcus maripaludis (strain C5 / ATCC BAA-1333).